We begin with the raw amino-acid sequence, 217 residues long: Outer-membrane lipoprotein LolB (217 aa).

An N-terminal signal peptide occupies residues 1–20 (MSKTVRTLALGGLVLAGLSA). The N-palmitoyl cysteine moiety is linked to residue Cys-21. A lipid anchor (S-diacylglycerol cysteine) is attached at Cys-21. Positions 105-124 (DTTSGAGRLEGLEGGPRSGP) are disordered.

It belongs to the LolB family. In terms of assembly, monomer.

It is found in the cell outer membrane. Functionally, plays a critical role in the incorporation of lipoproteins in the outer membrane after they are released by the LolA protein. The polypeptide is Outer-membrane lipoprotein LolB (Xanthomonas axonopodis pv. citri (strain 306)).